The primary structure comprises 378 residues: Alanine racemase (378 aa).

Lysine 40 serves as the catalytic Proton acceptor; specific for D-alanine. The residue at position 40 (lysine 40) is an N6-(pyridoxal phosphate)lysine. Substrate is bound at residue arginine 140. Catalysis depends on tyrosine 270, which acts as the Proton acceptor; specific for L-alanine. Residue methionine 317 participates in substrate binding.

Belongs to the alanine racemase family. The cofactor is pyridoxal 5'-phosphate.

The catalysed reaction is L-alanine = D-alanine. It participates in amino-acid biosynthesis; D-alanine biosynthesis; D-alanine from L-alanine: step 1/1. Its function is as follows. Catalyzes the interconversion of L-alanine and D-alanine. May also act on other amino acids. The sequence is that of Alanine racemase (alr) from Lacticaseibacillus casei (strain BL23) (Lactobacillus casei).